The sequence spans 1818 residues: Protein encore (1818 aa).

3 disordered regions span residues 47-68 (ANSS…GVSG), 123-282 (SAAG…NSSN), and 317-413 (AERH…GFIS). Residues 52–66 (VGSGSGPGPGSGAGV) show a composition bias toward gly residues. The segment covering 124-137 (AAGSSNLGRQNSFG) has biased composition (polar residues). Positions 141 to 152 (GNMKGKHLTRSH) are enriched in basic residues. 4 stretches are compositionally biased toward low complexity: residues 156-179 (ESTS…QLQG), 186-199 (NNNN…AQSA), 217-233 (QQPQ…QQSV), and 266-282 (NSNG…NSSN). S267 and S270 each carry phosphoserine. A compositionally biased stretch (basic and acidic residues) spans 317–328 (AERHDRHERHEM). The residue at position 336 (S336) is a Phosphoserine. Basic and acidic residues predominate over residues 338 to 348 (NHDEEPYHYEP). Composition is skewed to low complexity over residues 372–381 (NLGGSSSGSI) and 391–410 (NCNN…NTSG). One can recognise an R3H domain in the interval 444 to 508 (RNILLKIEKD…QCVIVAVAKN (65 aa)). The SUZ domain maps to 510-576 (RIPEIRFQSL…ARSRIFSRTG (67 aa)). A Phosphoserine modification is found at S535. Residues 557-568 (FEEREEDYDRAR) are compositionally biased toward basic and acidic residues. Disordered stretches follow at residues 557–806 (FEER…SYEQ), 885–916 (QEQE…SQTP), 936–959 (PYSQ…EEPK), 1176–1249 (GQAP…YNPS), 1332–1648 (AAAG…LVSH), and 1684–1709 (GAGA…RSHI). Over residues 592 to 606 (YGGWEQQQQQQKQSQ) the composition is skewed to low complexity. Residues 644–655 (NYGGPPSSGGPG) show a composition bias toward gly residues. The segment covering 678–695 (QDSTGSTPWRLSPSSSGS) has biased composition (polar residues). A compositionally biased stretch (low complexity) spans 713–771 (SGNQYQSQNQGNSSSGGYNNYRKSSPHQQQQSQQQQQSQQHHQQQLQQPQQLHQQSSQQ). A compositionally biased stretch (polar residues) spans 772–784 (YATTELSCSSTES). The span at 893 to 904 (AGPSSSGSATSS) shows a compositional bias: low complexity. Residues 1176-1197 (GQAPMQQQAPHTGAGTTTGPPT) are compositionally biased toward low complexity. Polar residues predominate over residues 1220–1231 (SSNGSVVTSSAY). The segment covering 1381-1392 (ASQSAPSTPAAP) has biased composition (low complexity). A compositionally biased stretch (polar residues) spans 1430–1443 (TPHYYQGQNSNEGY). Positions 1503–1521 (ASPSSVSLGGASSSGGANS) are enriched in low complexity. Polar residues-rich tracts occupy residues 1554–1565 (AANSSPGVSSYE) and 1579–1596 (FRSQ…VSQR). The segment covering 1608–1633 (SHESSNNSPNSIVGSQSNSAANTPNA) has biased composition (low complexity). Gly residues predominate over residues 1684–1705 (GAGASGAAGSNGGHQPGGGGGA).

Interacts with hfp; however, given the nuclear localization of hfp, the relevance of such interaction is unclear. Interacts with CycE, Cul1, and the SCF-proteasome complex. In terms of tissue distribution, expressed in all germline cells of the germarium including the stem cells and dividing cystocytes.

It localises to the cytoplasm. Required for the regulation of germline mitosis, karyosome formation, and establishment of dorsoventral (DS) polarity of the egg and embryo. Involved in proper grk mRNA localization and translation in the oocyte. May control germline mitosis by facilitating the cyclin E (CycE) proteolysis by the SCF-ubiquitin-proteasome complex. This chain is Protein encore (enc), found in Drosophila melanogaster (Fruit fly).